The sequence spans 440 residues: Ribosomal protein uS12 methylthiotransferase RimO (440 aa).

Residues 8 to 125 form the MTTase N-terminal domain; sequence LRCHAISLGC…WNEQILLALN (118 aa). [4Fe-4S] cluster contacts are provided by Cys17, Cys52, Cys87, Cys152, Cys156, and Cys159. A Radical SAM core domain is found at 138 to 368; it reads TTGKSYAWLK…MEIQLKISEK (231 aa). In terms of domain architecture, TRAM spans 371–439; it reads KNFVGKRLSL…SYDLVALADS (69 aa).

The protein belongs to the methylthiotransferase family. RimO subfamily. Requires [4Fe-4S] cluster as cofactor.

It localises to the cytoplasm. The enzyme catalyses L-aspartate(89)-[ribosomal protein uS12]-hydrogen + (sulfur carrier)-SH + AH2 + 2 S-adenosyl-L-methionine = 3-methylsulfanyl-L-aspartate(89)-[ribosomal protein uS12]-hydrogen + (sulfur carrier)-H + 5'-deoxyadenosine + L-methionine + A + S-adenosyl-L-homocysteine + 2 H(+). Functionally, catalyzes the methylthiolation of an aspartic acid residue of ribosomal protein uS12. This chain is Ribosomal protein uS12 methylthiotransferase RimO, found in Lawsonia intracellularis (strain PHE/MN1-00).